Consider the following 73-residue polypeptide: Long neurotoxin 2 (73 aa).

5 disulfides stabilise this stretch: Cys3–Cys21, Cys14–Cys42, Cys27–Cys31, Cys46–Cys57, and Cys58–Cys63.

Belongs to the three-finger toxin family. Long-chain subfamily. Type II alpha-neurotoxin sub-subfamily. As to expression, expressed by the venom gland.

The protein localises to the secreted. In terms of biological role, binds with high affinity to muscular (alpha-1/CHRNA1) and neuronal (alpha-7/CHRNA7) nicotinic acetylcholine receptor (nAChR) and inhibits acetylcholine from binding to the receptor, thereby impairing neuromuscular and neuronal transmission. In Ophiophagus hannah (King cobra), this protein is Long neurotoxin 2.